Consider the following 275-residue polypeptide: 3-methyl-2-oxobutanoate hydroxymethyltransferase (275 aa).

Residues Asp49 and Asp88 each coordinate Mg(2+). 3-methyl-2-oxobutanoate is bound by residues 49 to 50, Asp88, and Lys118; that span reads DS. Glu120 is a binding site for Mg(2+). Glu187 serves as the catalytic Proton acceptor.

Belongs to the PanB family. Homodecamer; pentamer of dimers. It depends on Mg(2+) as a cofactor.

The protein localises to the cytoplasm. The catalysed reaction is 3-methyl-2-oxobutanoate + (6R)-5,10-methylene-5,6,7,8-tetrahydrofolate + H2O = 2-dehydropantoate + (6S)-5,6,7,8-tetrahydrofolate. The protein operates within cofactor biosynthesis; (R)-pantothenate biosynthesis; (R)-pantoate from 3-methyl-2-oxobutanoate: step 1/2. Catalyzes the reversible reaction in which hydroxymethyl group from 5,10-methylenetetrahydrofolate is transferred onto alpha-ketoisovalerate to form ketopantoate. The polypeptide is 3-methyl-2-oxobutanoate hydroxymethyltransferase (Brucella suis (strain ATCC 23445 / NCTC 10510)).